Consider the following 5635-residue polypeptide: Hemicentin-1 (5635 aa).

The N-terminal stretch at 1–21 (MISWEVVHTVFLFALLYSSLA) is a signal peptide. In terms of domain architecture, VWFA spans 41 to 216 (TLAFVFDVTG…EVLKWVEEAV (176 aa)). N-linked (GlcNAc...) asparagine glycans are attached at residues Asn-349 and Asn-390. Ig-like C2-type domains are found at residues 431–517 (PKVT…FDVS), 520–607 (PPVI…VFLT), 612–697 (PKVT…STLR), 702–788 (PKLM…ITLD), 793–883 (PVFI…TTVT), 890–976 (PLIG…TSVV), 981–1067 (PTIQ…VQLT), 1072–1166 (PRVF…VKLN), 1171–1255 (PKIQ…TEIT), 1262–1354 (PTVE…YNLK), 1358–1447 (PPVI…FNID), 1452–1541 (PTII…IKLT), 1546–1634 (PSIK…FHVD), 1638–1724 (PPMI…KEIK), 1733–1821 (PAIE…FEVT), 1826–1914 (PTIK…IQLH), 1919–2007 (PSLE…YSLQ), 2012–2097 (PSIS…RDID), 2104–2190 (PNIM…YNVN), 2195–2285 (PNIG…YNLQ), 2290–2379 (PTIT…YDLS), 2384–2470 (PSII…RKIF), 2478–2564 (PHIV…RSFS), 2571–2662 (PTIA…YEVK), 2666–2763 (PPII…VNIQ), 2766–2864 (PSFQ…YDVR), 2868–2959 (PPII…FNLN), 2964–3051 (PSVI…FSLT), 3056–3146 (PSIK…FHLN), 3151–3240 (PSIE…YFLS), 3245–3335 (PSVA…FNLN), 3340–3429 (PTIR…YNLQ), 3434–3516 (PNMD…GEVS), 3527–3615 (PHIN…YLVR), 3620–3708 (PNIA…FILT), 3713–3797 (PNIK…RRID), 3804–3892 (PSIA…VDLT), 3897–3983 (PSIA…VTLH), 3988–4076 (PVIQ…LNVQ), 4079–4164 (PVIS…TKLT), 4169–4255 (PRIR…VSLT), 4260–4344 (PTFT…GFVY), 4348–4435 (PPVF…MSLT), and 4440–4527 (PIIT…VIVQ). Cys-451 and Cys-499 are joined by a disulfide. 4 N-linked (GlcNAc...) asparagine glycosylation sites follow: Asn-528, Asn-550, Asn-573, and Asn-620. A disulfide bond links Cys-541 and Cys-591. An intrachain disulfide couples Cys-633 to Cys-681. A glycan (N-linked (GlcNAc...) asparagine) is linked at Asn-693. Residues Cys-723 and Cys-772 are joined by a disulfide bond. Asn-809 carries an N-linked (GlcNAc...) asparagine glycan. 2 cysteine pairs are disulfide-bonded: Cys-814–Cys-867 and Cys-911–Cys-960. Asn-970 is a glycosylation site (N-linked (GlcNAc...) asparagine). Disulfide bonds link Cys-1002–Cys-1051 and Cys-1101–Cys-1150. Asn-1158 is a glycosylation site (N-linked (GlcNAc...) asparagine). Cys-1192 and Cys-1241 are oxidised to a cystine. A glycan (N-linked (GlcNAc...) asparagine) is linked at Asn-1272. The cysteines at positions 1288 and 1338 are disulfide-linked. A glycan (N-linked (GlcNAc...) asparagine) is linked at Asn-1369. Intrachain disulfides connect Cys-1382–Cys-1431 and Cys-1475–Cys-1525. N-linked (GlcNAc...) asparagine glycosylation is present at Asn-1552. Disulfide bonds link Cys-1569–Cys-1618, Cys-1663–Cys-1712, Cys-1756–Cys-1805, and Cys-1848–Cys-1898. N-linked (GlcNAc...) asparagine glycosylation is present at Asn-1929. Intrachain disulfides connect Cys-1942–Cys-1991 and Cys-2033–Cys-2083. N-linked (GlcNAc...) asparagine glycans are attached at residues Asn-2112 and Asn-2155. Disulfide bonds link Cys-2125/Cys-2174, Cys-2218/Cys-2269, and Cys-2314/Cys-2363. N-linked (GlcNAc...) asparagine glycosylation occurs at Asn-2395. 3 disulfides stabilise this stretch: Cys-2408–Cys-2457, Cys-2501–Cys-2550, and Cys-2597–Cys-2646. N-linked (GlcNAc...) asparagine glycosylation occurs at Asn-2689. 2 disulfides stabilise this stretch: Cys-2696–Cys-2745 and Cys-2799–Cys-2848. Asn-2887 carries N-linked (GlcNAc...) asparagine glycosylation. Cys-2894 and Cys-2943 are joined by a disulfide. Asn-2973 carries an N-linked (GlcNAc...) asparagine glycan. Intrachain disulfides connect Cys-2986/Cys-3035, Cys-3081/Cys-3130, Cys-3173/Cys-3224, Cys-3268/Cys-3319, Cys-3364/Cys-3413, and Cys-3457/Cys-3506. 2 N-linked (GlcNAc...) asparagine glycosylation sites follow: Asn-3221 and Asn-3300. Residue Asn-3530 is glycosylated (N-linked (GlcNAc...) asparagine). 2 disulfide bridges follow: Cys-3550/Cys-3599 and Cys-3643/Cys-3692. Asn-3689 and Asn-3727 each carry an N-linked (GlcNAc...) asparagine glycan. Cys-3734 and Cys-3783 form a disulfide bridge. The N-linked (GlcNAc...) asparagine glycan is linked to Asn-3812. Cystine bridges form between Cys-3825–Cys-3876, Cys-3918–Cys-3967, Cys-4009–Cys-4058, Cys-4100–Cys-4148, Cys-4190–Cys-4239, Cys-4281–Cys-4328, Cys-4371–Cys-4419, Cys-4461–Cys-4509, Cys-4541–Cys-4578, Cys-4545–Cys-4583, Cys-4556–Cys-4568, Cys-4598–Cys-4635, Cys-4602–Cys-4640, Cys-4613–Cys-4625, Cys-4655–Cys-4692, Cys-4659–Cys-4697, Cys-4670–Cys-4682, Cys-4712–Cys-4749, Cys-4716–Cys-4754, Cys-4727–Cys-4739, Cys-4769–Cys-4806, Cys-4773–Cys-4811, Cys-4784–Cys-4796, Cys-4826–Cys-4863, Cys-4830–Cys-4868, and Cys-4841–Cys-4853. The N-linked (GlcNAc...) asparagine glycan is linked to Asn-4029. N-linked (GlcNAc...) asparagine glycans are attached at residues Asn-4401 and Asn-4491. 6 consecutive TSP type-1 domains span residues 4529-4584 (HGGF…KPCP), 4586-4641 (DGSW…RPCP), 4643-4698 (HGAW…RNCP), 4700-4755 (HGKW…DPCP), 4757-4812 (HGNW…DMCP), and 4814-4869 (DGSW…QACP). Residue Asn-4606 is glycosylated (N-linked (GlcNAc...) asparagine). The 223-residue stretch at 4871–5093 (GPQRARGSVI…SKGDRSNQCP (223 aa)) folds into the Nidogen G2 beta-barrel domain. N-linked (GlcNAc...) asparagine glycans are attached at residues Asn-4894 and Asn-5040. The EGF-like 1; calcium-binding domain maps to 5107–5146 (DEDECAAGNPCSHSCHNAMGTYYCSCPKGLTIAADGRTCQ). 3 cysteine pairs are disulfide-bonded: Cys-5111–Cys-5121, Cys-5117–Cys-5130, and Cys-5132–Cys-5145. The 45-residue stretch at 5147-5191 (DIDECALGRHTCHAGQDCDNTIGSYRCVVRCGSGFRRTSDGLSCQ) folds into the EGF-like 2; calcium-binding domain. An EGF-like 3; calcium-binding domain is found at 5192 to 5229 (DINECQESSPCHQRCFNAIGSFHCGCEPGYQLKGRKCM). 3 disulfide bridges follow: Cys-5196-Cys-5206, Cys-5202-Cys-5215, and Cys-5217-Cys-5228. An EGF-like 4; calcium-binding domain is found at 5230 to 5271 (DVNECRQNVCRPDQHCKNTRGGYKCIDLCPNGMTKAENGTCI). Asn-5267 carries an N-linked (GlcNAc...) asparagine glycan. The region spanning 5272 to 5307 (DIDECKDGTHQCRYNQICENTRGSYRCVCPRGYRSQ) is the EGF-like 5; calcium-binding domain. 8 cysteine pairs are disulfide-bonded: Cys-5276-Cys-5289, Cys-5283-Cys-5298, Cys-5319-Cys-5330, Cys-5326-Cys-5339, Cys-5341-Cys-5354, Cys-5436-Cys-5446, Cys-5442-Cys-5455, and Cys-5457-Cys-5470. One can recognise an EGF-like 6; calcium-binding domain in the interval 5315–5355 (DINECEQVPKPCAHQCSNTPGSFKCICPPGQHLLGDGKSCA). One can recognise an EGF-like 7; calcium-binding domain in the interval 5432-5471 (DIDECENTDACQHECKNTFGSYQCICPPGYQLTHNGKTCQ). A glycan (N-linked (GlcNAc...) asparagine) is linked at Asn-5615.

As to expression, expressed in hair follicles and in the dermis (at protein level). In terms of tissue distribution, expressed in skin fibroblasts and retinal pigment epithelium (RPE) cells.

It is found in the secreted. The protein localises to the extracellular space. The protein resides in the extracellular matrix. It localises to the basement membrane. Its subcellular location is the cytoplasm. It is found in the cell junction. The protein localises to the cleavage furrow. In terms of biological role, involved in transforming growth factor beta-mediated rearrangement of the podocyte cytoskeleton which includes reduction of F-actin fibers and broadening, flattening and elongation of podocytes. Plays a role in basement membrane organization. May promote cleavage furrow maturation during cytokinesis in preimplantation embryos. May play a role in the architecture of adhesive and flexible epithelial cell junctions. May play a role during myocardial remodeling by imparting an effect on cardiac fibroblast migration. This Homo sapiens (Human) protein is Hemicentin-1 (HMCN1).